A 213-amino-acid polypeptide reads, in one-letter code: Large ribosomal subunit protein bL25 (213 aa).

It belongs to the bacterial ribosomal protein bL25 family. CTC subfamily. As to quaternary structure, part of the 50S ribosomal subunit; part of the 5S rRNA/L5/L18/L25 subcomplex. Contacts the 5S rRNA. Binds to the 5S rRNA independently of L5 and L18.

Functionally, this is one of the proteins that binds to the 5S RNA in the ribosome where it forms part of the central protuberance. The protein is Large ribosomal subunit protein bL25 of Mesorhizobium japonicum (strain LMG 29417 / CECT 9101 / MAFF 303099) (Mesorhizobium loti (strain MAFF 303099)).